Here is a 308-residue protein sequence, read N- to C-terminus: Ornithine carbamoyltransferase (308 aa).

Residues 56 to 59 (STRT), Gln-83, Arg-107, and 134 to 137 (HPCQ) each bind carbamoyl phosphate. L-ornithine is bound by residues Asn-165, Asp-225, and 229 to 230 (SM). Residues 266 to 267 (CL) and Arg-294 contribute to the carbamoyl phosphate site.

This sequence belongs to the aspartate/ornithine carbamoyltransferase superfamily. OTCase family.

The protein resides in the cytoplasm. It carries out the reaction carbamoyl phosphate + L-ornithine = L-citrulline + phosphate + H(+). It functions in the pathway amino-acid degradation; L-arginine degradation via ADI pathway; carbamoyl phosphate from L-arginine: step 2/2. Its function is as follows. Reversibly catalyzes the transfer of the carbamoyl group from carbamoyl phosphate (CP) to the N(epsilon) atom of ornithine (ORN) to produce L-citrulline. This is Ornithine carbamoyltransferase from Cereibacter sphaeroides (strain KD131 / KCTC 12085) (Rhodobacter sphaeroides).